The primary structure comprises 228 residues: uncharacterized protein (228 aa).

The stretch at 196 to 228 (VKITELLDKAKISINDLNKTIEKLNETVNKYHG) forms a coiled coil.

This is an uncharacterized protein from Acanthamoeba polyphaga (Amoeba).